Consider the following 204-residue polypeptide: Large ribosomal subunit protein uL10 (204 aa).

Residues 170-204 form a disordered region; the sequence is AADPSVIGGAGEASDQEPKTTETPEASAAQDNTNE. Residues 192–204 show a composition bias toward polar residues; it reads TPEASAAQDNTNE.

It belongs to the universal ribosomal protein uL10 family. Part of the ribosomal stalk of the 50S ribosomal subunit. The N-terminus interacts with L11 and the large rRNA to form the base of the stalk. The C-terminus forms an elongated spine to which L12 dimers bind in a sequential fashion forming a multimeric L10(L12)X complex.

Forms part of the ribosomal stalk, playing a central role in the interaction of the ribosome with GTP-bound translation factors. The sequence is that of Large ribosomal subunit protein uL10 from Cutibacterium acnes (strain DSM 16379 / KPA171202) (Propionibacterium acnes).